Consider the following 624-residue polypeptide: DNA (cytosine-5)-methyltransferase DRM1 (624 aa).

UBA domains follow at residues 57 to 100 (RISD…LFNY) and 108 to 149 (SSKS…LLTY). The segment at 160 to 189 (DMNININDDDDDNLYSLSSDDEEDELNNSS) is disordered. A compositionally biased stretch (acidic residues) spans 166 to 185 (NDDDDDNLYSLSSDDEEDEL). Residues 188–231 (SSNEDRILQALIKMGYLREDAAIAIERCGEDASMEEVVDFICAA) form the UBA 3 domain. The SAM-dependent MTase DRM-type domain occupies 291–622 (MHRPVPIPDI…EAVRRKARHM (332 aa)).

This sequence belongs to the class I-like SAM-binding methyltransferase superfamily. DRM-methyltransferase family.

The protein resides in the nucleus. It carries out the reaction a 2'-deoxycytidine in DNA + S-adenosyl-L-methionine = a 5-methyl-2'-deoxycytidine in DNA + S-adenosyl-L-homocysteine + H(+). Its function is as follows. Involved in de novo DNA methylation. Controls asymmetric and CpNpG methylation. Required for FWA gene silencing but not for the maintenance of SUP gene silencing. Functionally redundant to CMT3 to maintain non-CpG methylation. Involved in RNA-directed DNA methylation. This chain is DNA (cytosine-5)-methyltransferase DRM1 (DRM1), found in Arabidopsis thaliana (Mouse-ear cress).